The sequence spans 1087 residues: MADHVQSLAQLENLCKQLYETTDTTTRLQAEKALVEFTNSPDCLSKCQLLLERGSSSYSQLLAATCLTKLVSRTNNPLPLEQRIDIRNYVLNYLATRPKLATFVTQALIQLYARITKLGWFDCQKDDYVFRNAITDVTRFLQDSVEYCIIGVTILSQLTNEINQADTTHPLTKHRKIASSFRDSSLFDIFTLSCNLLKQASGKNLNLNDESQHGLLMQLLKLTHNCLNFDFIGTSTDESSDDLCTVQIPTSWRSAFLDSSTLQLFFDLYHSIPPSFSPLVLSCLVQIASVRRSLFNNAERAKFLSHLVDGVKRILENPQSLSDPNNYHEFCRLLARLKSNYQLGELVKVENYPEVIRLIANFTVTSLQHWEFAPNSVHYLLSLWQRLAASVPYVKATEPHMLETYTPEVTKAYITSRLESVHIILRDGLEDPLEDTGLVQQQLDQLSTIGRCEYEKTCALLVQLFDQSAQSYQELLQSASASPMDIAVQEGRLTWLVYIIGAVIGGRVSFASTDEQDAMDGELVCRVLQLMNLTDSRLAQAGNEKLELAMLSFFEQFRKIYIGDQVQKSSKLYRRLSEVLGLNDETMVLSVFIGKIITNLKYWGRCEPITSRTLQLLNDLSIGYSSVRKLVKLSAVQFMLNNHTSEHFSFLGINNQSNLTDMRCRTTFYTALGRLLMVDLGEDEDQYEQFMLPLTAAFEAVAQMFSTNSFNEQEAKRTLVGLVRDLRGIAFAFNAKTSFMMLFEWIYPSYMPILQRAIELWYHDPACTTPVLKLMAELVHNRSRRLQFDVSSPNGILLFRETSKMITMYGNRILTLGEVPKDQVYALKLKGISICFSMLKAALSGSYVNFGVFRLYGDDALDNALQTFIKLLLSIPHSDLLDYPKLSQSYYSLLEVLTQDHMNFIASLEPHVIMYILSSISEGLTALDTMVCTGCCSCLDHIVTYLFKQLSRSTKKRTTPLNQESDRFLHIMQQHPEMIQQMLSTVLNIIIFEDCRNQWSMSRPLLGLILLNEKYFSDLRNSIVNSQPPEKQQAMHLCFENLMEGIERNLLTKNRDRFTQNLSAFRREVNDSMKNSTYGVNSNDMMS.

Residue A2 is modified to N-acetylalanine. Residues 30–96 (AEKALVEFTN…RNYVLNYLAT (67 aa)) form the Importin N-terminal domain. S570 carries the post-translational modification Phosphoserine.

The protein belongs to the exportin family. As to quaternary structure, binds to nucleoporins. Found in a complex with XPO7, EIF4A1, ARHGAP1, VPS26A, VPS29, VPS35 and SFN. Interacts with ARHGAP1 and SFN. Interacts with Ran and cargo proteins in a GTP-dependent manner.

It is found in the cytoplasm. The protein resides in the nucleus. Its subcellular location is the nuclear pore complex. Functionally, mediates the nuclear export of proteins (cargos) with broad substrate specificity. In the nucleus binds cooperatively to its cargo and to the GTPase Ran in its active GTP-bound form. Docking of this trimeric complex to the nuclear pore complex (NPC) is mediated through binding to nucleoporins. Upon transit of a nuclear export complex into the cytoplasm, disassembling of the complex and hydrolysis of Ran-GTP to Ran-GDP (induced by RANBP1 and RANGAP1, respectively) cause release of the cargo from the export receptor. XPO7 then return to the nuclear compartment and mediate another round of transport. The directionality of nuclear export is thought to be conferred by an asymmetric distribution of the GTP- and GDP-bound forms of Ran between the cytoplasm and nucleus. This chain is Exportin-7 (XPO7), found in Pongo abelii (Sumatran orangutan).